The primary structure comprises 424 residues: MKPQWQQYIQIINQVVKPALGCTEPIAAAYAAAVARTLLNDDPDSIAVQVSDNLYKNSMGVYVPGTGKIGLAIAAAAGALAGNADAGLEVLASVTPEQVAQAQALIDAAKVKVERTETDEFIYCCVTLTSGEQEAMVKICGGHTLIAEKRLNGELVFTADNAQAKATGSICDGVDINIESIYRFAEEVPFEEIQFILKASELNSKLSDEGMSKPYGLEVGRTMKNGIAAGIIGEDLLNKIVMLTAAASDARMGGANLPAMSNLGSGNQGIAATIPVVITAQCYKVSEEKLARALIMSHLGAIYIKSHYPPLSAFCGNTVTSAAASMAMVYLAGGSFEQSCFAIQNVISDSSGMVCDGAKASCAMKVSTSSSAAVRSFLMALSSQNVSGQGIIANHVEKTIKNIGKMVLNGMSSTDVTIINIMSE.

The protein belongs to the UPF0597 family.

In Shewanella oneidensis (strain ATCC 700550 / JCM 31522 / CIP 106686 / LMG 19005 / NCIMB 14063 / MR-1), this protein is UPF0597 protein SO_1403.